The chain runs to 265 residues: Probable trehalose-phosphate phosphatase (265 aa).

Residue Asp35 is the Nucleophile of the active site. Mg(2+) contacts are provided by Asp35, Asp37, and Asp213. Residue 35 to 37 (DID) participates in substrate binding.

It belongs to the trehalose phosphatase family. It depends on Mg(2+) as a cofactor.

It carries out the reaction alpha,alpha-trehalose 6-phosphate + H2O = alpha,alpha-trehalose + phosphate. It functions in the pathway glycan biosynthesis; trehalose biosynthesis. In terms of biological role, removes the phosphate from trehalose 6-phosphate to produce free trehalose. In Sinorhizobium fredii (strain NBRC 101917 / NGR234), this protein is Probable trehalose-phosphate phosphatase (otsB).